The sequence spans 429 residues: O-methyltransferase phnC (429 aa).

Position 285 (D285) interacts with S-adenosyl-L-methionine.

This sequence belongs to the class I-like SAM-binding methyltransferase superfamily. Cation-independent O-methyltransferase family. COMT subfamily.

It catalyses the reaction (2'R)-atrovenetin + S-adenosyl-L-methionine = deoxyherqueinone + S-adenosyl-L-homocysteine + H(+). It participates in secondary metabolite biosynthesis. In terms of biological role, O-methyltransferase; part of the gene cluster that mediates the biosynthesis of phenalenones such as herqueinone, compounds that have been reported to treat tumors, bacterial infections and/or mycoses, and rheumatic diseases. The non-reducing polyketide synthase phnA synthesizes the heptaketide backbone and cyclizes it into the angular, hemiketal-containing naphtho-gamma-pyrone prephenalenone. The product template (PT) domain of phnA catalyzes only the C4-C9 aldol condensation, which is unprecedented among known PT domains. The transformation of prephenalenone to phenalenones requires an FAD-dependent monooxygenase phnB, which catalyzes the C2 aromatic hydroxylation of prephenalenone and ring opening of the gamma-pyrone ring simultaneously. Subsequent intramolecular deprotonation of C3 phenolic oxygen accelerates phenalenone ring closure to yield the tricyclic phenalenone core with a C2 hydroxylation. The prenyltransferase phnF further catalyzes reverse C-prenylation of phenalenone by direct electrophilic substitution at C6, or possibly via first a forward O-prenylation of a neighboring phenol in phenalenone, followed by a Claisen rearrangement. The hydroalkoxylation enzyme phnH catalyzes the 5-exo-trig cyclization via acid catalysis after the spontaneous deprotonation of 7-OH, which leads to the formation of the dihydrobenzofuran atrovenetin. Atrovenetin is further converted to deoxyherqueinone by the O-methyltransferase phnC which can methylate C2-OH to stabilize the northern portion of the phenalenone core. Finally, the oxidoreductase phnG converts deoxyherqueinone to herqueinone via C6 hydroxylation. The protein is O-methyltransferase phnC of Penicillium herquei.